Reading from the N-terminus, the 372-residue chain is Queuine tRNA-ribosyltransferase (372 aa).

The active-site Proton acceptor is the Asp-89. Substrate is bound by residues 89–93 (DSGGF), Asp-143, Gln-185, and Gly-212. Residues 243 to 249 (GVGKPED) are RNA binding. The Nucleophile role is filled by Asp-262. The RNA binding; important for wobble base 34 recognition stretch occupies residues 267–271 (TRNAR). Zn(2+)-binding residues include Cys-300, Cys-302, Cys-305, and His-331.

This sequence belongs to the queuine tRNA-ribosyltransferase family. In terms of assembly, homodimer. Within each dimer, one monomer is responsible for RNA recognition and catalysis, while the other monomer binds to the replacement base PreQ1. Zn(2+) serves as cofactor.

It carries out the reaction 7-aminomethyl-7-carbaguanine + guanosine(34) in tRNA = 7-aminomethyl-7-carbaguanosine(34) in tRNA + guanine. It functions in the pathway tRNA modification; tRNA-queuosine biosynthesis. Functionally, catalyzes the base-exchange of a guanine (G) residue with the queuine precursor 7-aminomethyl-7-deazaguanine (PreQ1) at position 34 (anticodon wobble position) in tRNAs with GU(N) anticodons (tRNA-Asp, -Asn, -His and -Tyr). Catalysis occurs through a double-displacement mechanism. The nucleophile active site attacks the C1' of nucleotide 34 to detach the guanine base from the RNA, forming a covalent enzyme-RNA intermediate. The proton acceptor active site deprotonates the incoming PreQ1, allowing a nucleophilic attack on the C1' of the ribose to form the product. After dissociation, two additional enzymatic reactions on the tRNA convert PreQ1 to queuine (Q), resulting in the hypermodified nucleoside queuosine (7-(((4,5-cis-dihydroxy-2-cyclopenten-1-yl)amino)methyl)-7-deazaguanosine). In Pseudomonas aeruginosa (strain LESB58), this protein is Queuine tRNA-ribosyltransferase.